The sequence spans 543 residues: Carboxypeptidase Y homolog A (543 aa).

The signal sequence occupies residues 1 to 17 (MRVLPATLLVGAATAAA). The propeptide occupies 18 to 124 (PPFQQILGLP…KLEAYDLRVK (107 aa)). 5 disulfides stabilise this stretch: Cys-179–Cys-419, Cys-313–Cys-327, Cys-337–Cys-360, Cys-344–Cys-353, and Cys-382–Cys-389. The N-linked (GlcNAc...) asparagine glycan is linked to Asn-210. Residue Ser-266 is part of the active site. Asp-458 is an active-site residue. N-linked (GlcNAc...) asparagine glycosylation is present at Asn-509. The active site involves His-520.

This sequence belongs to the peptidase S10 family.

It is found in the vacuole. The catalysed reaction is Release of a C-terminal amino acid with broad specificity.. Functionally, vacuolar carboxypeptidase involved in degradation of small peptides. Digests preferentially peptides containing an aliphatic or hydrophobic residue in P1' position, as well as methionine, leucine or phenylalanine in P1 position of ester substrate. This chain is Carboxypeptidase Y homolog A (cpyA), found in Neosartorya fischeri (strain ATCC 1020 / DSM 3700 / CBS 544.65 / FGSC A1164 / JCM 1740 / NRRL 181 / WB 181) (Aspergillus fischerianus).